A 117-amino-acid polypeptide reads, in one-letter code: Immunoglobulin heavy variable 1-69D (117 aa).

The first 19 residues, 1-19 (MDWTWRFLFVVAAATGVQS), serve as a signal peptide directing secretion. The residue at position 20 (Gln20) is a Pyrrolidone carboxylic acid. A framework-1 region spans residues 20–44 (QVQLVQSGAEVKKPGSSVKVSCKAS). The 98-residue stretch at 20-117 (QVQLVQSGAE…EDTAVYYCAR (98 aa)) folds into the Ig-like domain. An intrachain disulfide couples Cys41 to Cys115. The complementarity-determining-1 stretch occupies residues 45–52 (GGTFSSYA). The tract at residues 53–69 (ISWVRQAPGQGLEWMGG) is framework-2. The complementarity-determining-2 stretch occupies residues 70–77 (IIPIFGTA). Residues 78–115 (NYAQKFQGRVTITADESTSTAYMELSSLRSEDTAVYYC) form a framework-3 region. The complementarity-determining-3 stretch occupies residues 116 to 117 (AR).

Immunoglobulins are composed of two identical heavy chains and two identical light chains; disulfide-linked.

Its subcellular location is the secreted. The protein resides in the cell membrane. V region of the variable domain of immunoglobulin heavy chains that participates in the antigen recognition. Immunoglobulins, also known as antibodies, are membrane-bound or secreted glycoproteins produced by B lymphocytes. In the recognition phase of humoral immunity, the membrane-bound immunoglobulins serve as receptors which, upon binding of a specific antigen, trigger the clonal expansion and differentiation of B lymphocytes into immunoglobulins-secreting plasma cells. Secreted immunoglobulins mediate the effector phase of humoral immunity, which results in the elimination of bound antigens. The antigen binding site is formed by the variable domain of one heavy chain, together with that of its associated light chain. Thus, each immunoglobulin has two antigen binding sites with remarkable affinity for a particular antigen. The variable domains are assembled by a process called V-(D)-J rearrangement and can then be subjected to somatic hypermutations which, after exposure to antigen and selection, allow affinity maturation for a particular antigen. The protein is Immunoglobulin heavy variable 1-69D of Homo sapiens (Human).